We begin with the raw amino-acid sequence, 105 residues long: Integration host factor (105 aa).

An H2TH motif, binds DNA motif is present at residues 64–71 (LPKVGKVK). The interval 82-94 (APTRRLRGLGDRQ) is lid, binds DNA.

It belongs to the actinobacterial IHF (aIHF) family. In terms of assembly, homodimer in solution. Binds DNA as a monomer.

It is found in the cytoplasm. A nucleoid-associated protein (NAP) required for septum formation and normal cell division as well as for DNA segregation. Binds about 135 sites across the chromosome, most of which are genes involved in virulence; most DNA-binding sites are immediately upstream of transcription start sites. When mIHF is depleted most of the genes are down-regulated. Binds supercoiled and linear dsDNA in a concentration-dependent manner, probably non-sequence specifically. Binding compacts DNA, protecting it from degradation. Initial binding to supercoiled DNA opens it fully, followed by bending and compaction. Bends and thus compacts linear DNA. Binds DNA via 2 sites, forms left-handed loops on linear DNA; at low concentrations unwinds larger cosmids (42.6 kb) then collapses and condenses DNA as protein levels rise. Forms mostly left-handed loops on condensing cosmid DNA. The polypeptide is Integration host factor (Mycobacterium tuberculosis (strain ATCC 25618 / H37Rv)).